The following is a 43-amino-acid chain: Disintegrin CV (43 aa).

4 disulfides stabilise this stretch: Cys-1–Cys-10, Cys-6–Cys-29, Cys-7–Cys-34, and Cys-19–Cys-36. In terms of domain architecture, Disintegrin spans 1-43 (CTTGPCCRQCKLKPAGTTCWRTSVSSHYCTGRSCECPSYPGNG). The short motif at 21–23 (RTS) is the Cell attachment site; atypical (RTS) element.

The protein belongs to the disintegrin family. Short disintegrin subfamily. Monomer. Expressed by the venom gland.

The protein resides in the secreted. In terms of biological role, specifically interacts with the alpha-1/beta-1 integrin (ITGA1/ITGB1). Exhibits highly inhibitory effects on cell adhesion and cell migration to collagens I and IV. Also shows in vivo anti-angiogenic activity. This Cerastes vipera (Sahara sand viper) protein is Disintegrin CV.